We begin with the raw amino-acid sequence, 279 residues long: 4-diphosphocytidyl-2-C-methyl-D-erythritol kinase (279 aa).

Lys-11 is an active-site residue. 95–105 contributes to the ATP binding site; that stretch reads PVAAGLGGGSS. Residue Asp-137 is part of the active site.

This sequence belongs to the GHMP kinase family. IspE subfamily.

The enzyme catalyses 4-CDP-2-C-methyl-D-erythritol + ATP = 4-CDP-2-C-methyl-D-erythritol 2-phosphate + ADP + H(+). The protein operates within isoprenoid biosynthesis; isopentenyl diphosphate biosynthesis via DXP pathway; isopentenyl diphosphate from 1-deoxy-D-xylulose 5-phosphate: step 3/6. Catalyzes the phosphorylation of the position 2 hydroxy group of 4-diphosphocytidyl-2C-methyl-D-erythritol. This Geotalea daltonii (strain DSM 22248 / JCM 15807 / FRC-32) (Geobacter daltonii) protein is 4-diphosphocytidyl-2-C-methyl-D-erythritol kinase.